The chain runs to 368 residues: C-X-C chemokine receptor type 3 (368 aa).

Residues methionine 1–arginine 53 are Extracellular-facing. Asparagine 22 carries an N-linked (GlcNAc...) asparagine glycan. Sulfotyrosine occurs at positions 27 and 29. Asparagine 32 carries an N-linked (GlcNAc...) asparagine glycan. A helical transmembrane segment spans residues alanine 54–serine 80. Topologically, residues arginine 81 to aspartate 89 are cytoplasmic. Residues threonine 90 to alanine 110 form a helical membrane-spanning segment. The Extracellular segment spans residues valine 111–lysine 125. Cysteine 124 and cysteine 203 form a disulfide bridge. Residues valine 126 to phenylalanine 147 form a helical membrane-spanning segment. At aspartate 148–threonine 169 the chain is on the cytoplasmic side. Residues leucine 170–phenylalanine 189 traverse the membrane as a helical segment. At leucine 190 to arginine 212 the chain is on the extracellular side. The chain crosses the membrane as a helical span at residues threonine 213 to tyrosine 233. Residues cysteine 234–arginine 255 are Cytoplasmic-facing. The helical transmembrane segment at leucine 256–valine 277 threads the bilayer. The Extracellular portion of the chain corresponds to aspartate 278–valine 298. The chain crosses the membrane as a helical span at residues alanine 299 to valine 321. Residues glycine 322 to leucine 368 lie on the Cytoplasmic side of the membrane. The interval arginine 342 to leucine 368 is disordered. Residues tryptophan 357–leucine 368 are compositionally biased toward low complexity.

It belongs to the G-protein coupled receptor 1 family. In terms of assembly, homomer. Forms heteromers with ACKR4. As to quaternary structure, interacts with PF4/CXCL4. Sulfation on Tyr-27 and Tyr-29 is essential for CXCL10 binding and subsequent signal transduction induction. In terms of processing, N-glycosylated. As to expression, isoform 1 and isoform 2 are mainly expressed in heart, kidney, liver and skeletal muscle. Isoform 1 is also expressed in placenta. Isoform 2 is expressed in endothelial cells. Expressed in T-cells (at protein level).

It localises to the cell membrane. Its function is as follows. Receptor for the C-X-C chemokine CXCL9, CXCL10 and CXCL11 and mediates the proliferation, survival and angiogenic activity of human mesangial cells (HMC) through a heterotrimeric G-protein signaling pathway. Binds to CCL21. Probably promotes cell chemotaxis response. Upon activation by PF4, induces activated T-lymphocytes migration mediated via downstream Ras/extracellular signal-regulated kinase (ERK) signaling. In terms of biological role, receptor for the C-X-C chemokine CXCL4 and also mediates the inhibitory activities of CXCL9, CXCL10 and CXCL11 on the proliferation, survival and angiogenic activity of human microvascular endothelial cells (HMVEC) through a cAMP-mediated signaling pathway. Does not promote cell chemotaxis respons. Interaction with CXCL4 or CXCL10 leads to activation of the p38MAPK pathway and contributes to inhibition of angiogenesis. Overexpression in renal cancer cells down-regulates expression of the anti-apoptotic protein HMOX1 and promotes apoptosis. Functionally, mediates the activity of CXCL11. The sequence is that of C-X-C chemokine receptor type 3 (CXCR3) from Homo sapiens (Human).